The primary structure comprises 447 residues: Exodeoxyribonuclease 7 large subunit (447 aa).

Belongs to the XseA family. In terms of assembly, heterooligomer composed of large and small subunits.

The protein localises to the cytoplasm. It catalyses the reaction Exonucleolytic cleavage in either 5'- to 3'- or 3'- to 5'-direction to yield nucleoside 5'-phosphates.. Functionally, bidirectionally degrades single-stranded DNA into large acid-insoluble oligonucleotides, which are then degraded further into small acid-soluble oligonucleotides. The sequence is that of Exodeoxyribonuclease 7 large subunit from Streptococcus mutans serotype c (strain ATCC 700610 / UA159).